The chain runs to 725 residues: Homeobox protein unc-62 (725 aa).

The 86-residue stretch at 133-218 folds into the MEIS N-terminal domain; that stretch reads SSDVCSSASF…PLDIVGDERA (86 aa). 6 disordered regions span residues 214 to 258, 295 to 317, 329 to 359, 386 to 419, 491 to 555, and 615 to 661; these read GDER…PYEP, SSSS…LHST, VSSP…GNSM, SLHQ…PPPQ, VKME…KRKV, and IDQN…PDPT. Positions 219-239 are enriched in low complexity; that stretch reads SSSQPPMSPGSMGHHGHSGSP. Over residues 388–400 the composition is skewed to basic residues; the sequence is HQHHLHHPHHFPH. A compositionally biased stretch (low complexity) spans 498–508; it reads SVSSSKSGGKK. The segment covering 541–550 has biased composition (polar residues); it reads LSDSANGSQN. The segment at residues 552–614 is a DNA-binding region (homeobox; TALE-type); it reads KRKVPKVFSK…NARRRIVQPM (63 aa).

Belongs to the TALE/MEIS homeobox family.

The protein resides in the nucleus. In terms of biological role, acts redundantly with ceh-20 and ceh-40 to perform overlapping roles during embryogenesis. Required for postembryonic development of the ectoderm, including the Q, V and P cell lineages, playing a crucial role in ensuring that these cells and their descendants undergo their invariant patterns of cell division, migration, fusion and morphogenesis. Has a role in the mig-13 pathway to promote anterior migration of neuroblasts in the Q lineage. Required for multiple roles in regulating vulva development. The sequence is that of Homeobox protein unc-62 (unc-62) from Caenorhabditis briggsae.